A 438-amino-acid polypeptide reads, in one-letter code: 5-methylthioadenosine/S-adenosylhomocysteine deaminase (438 aa).

Zn(2+) contacts are provided by His-66 and His-68. Glu-95, Arg-148, and His-188 together coordinate substrate. His-215 contacts Zn(2+). 2 residues coordinate substrate: Glu-218 and Asp-305. Position 305 (Asp-305) interacts with Zn(2+).

It belongs to the metallo-dependent hydrolases superfamily. MTA/SAH deaminase family. Requires Zn(2+) as cofactor.

The enzyme catalyses S-adenosyl-L-homocysteine + H2O + H(+) = S-inosyl-L-homocysteine + NH4(+). The catalysed reaction is S-methyl-5'-thioadenosine + H2O + H(+) = S-methyl-5'-thioinosine + NH4(+). Its function is as follows. Catalyzes the deamination of 5-methylthioadenosine and S-adenosyl-L-homocysteine into 5-methylthioinosine and S-inosyl-L-homocysteine, respectively. Is also able to deaminate adenosine. The protein is 5-methylthioadenosine/S-adenosylhomocysteine deaminase of Halalkalibacterium halodurans (strain ATCC BAA-125 / DSM 18197 / FERM 7344 / JCM 9153 / C-125) (Bacillus halodurans).